Here is a 58-residue protein sequence, read N- to C-terminus: SPbeta prophage-derived uncharacterized protein YonT (58 aa).

A helical membrane pass occupies residues 6–26 (GIVVAFLISLTVLTINSLTIV). Residues 35–58 (GTSKKKKRIRKRLRPKRQRQRIRR) form a disordered region. The span at 36 to 58 (TSKKKKRIRKRLRPKRQRQRIRR) shows a compositional bias: basic residues.

It is found in the cell membrane. The sequence is that of SPbeta prophage-derived uncharacterized protein YonT (yonT) from Bacillus subtilis (strain 168).